A 361-amino-acid chain; its full sequence is Molybdenum import ATP-binding protein ModC (361 aa).

The ABC transporter domain occupies 1–228; sequence MLNINIEKQL…EQMRPWVPLQ (228 aa). 31–38 lines the ATP pocket; sequence GRSGAGKT. Residues 289–356 enclose the Mop domain; that stretch reads GSSVRNLLRG…IKGVTMTQMD (68 aa).

The protein belongs to the ABC transporter superfamily. Molybdate importer (TC 3.A.1.8) family. In terms of assembly, the complex is composed of two ATP-binding proteins (ModC), two transmembrane proteins (ModB) and a solute-binding protein (ModA).

The protein localises to the cell inner membrane. It carries out the reaction molybdate(out) + ATP + H2O = molybdate(in) + ADP + phosphate + H(+). Its function is as follows. Part of the ABC transporter complex ModABC involved in molybdenum import. Responsible for energy coupling to the transport system. This is Molybdenum import ATP-binding protein ModC from Shewanella sp. (strain MR-7).